We begin with the raw amino-acid sequence, 727 residues long: Fatty acid oxidation complex subunit alpha (727 aa).

Residues 1 to 200 (MNDQQPFSAI…RQGLVDEAVP (200 aa)) form an enoyl-CoA hydratase region. The segment at 316–727 (KPIHYVGILG…PPTDEDDSAS (412 aa)) is 3-hydroxyacyl-CoA dehydrogenase.

The protein in the N-terminal section; belongs to the enoyl-CoA hydratase/isomerase family. It in the central section; belongs to the 3-hydroxyacyl-CoA dehydrogenase family. As to quaternary structure, heterotetramer of two alpha chains (FadJ) and two beta chains (FadI).

The protein resides in the cytoplasm. It carries out the reaction a (3S)-3-hydroxyacyl-CoA = a (2E)-enoyl-CoA + H2O. It catalyses the reaction a 4-saturated-(3S)-3-hydroxyacyl-CoA = a (3E)-enoyl-CoA + H2O. The enzyme catalyses a (3S)-3-hydroxyacyl-CoA + NAD(+) = a 3-oxoacyl-CoA + NADH + H(+). The catalysed reaction is (3S)-3-hydroxybutanoyl-CoA = (3R)-3-hydroxybutanoyl-CoA. It participates in lipid metabolism; fatty acid beta-oxidation. In terms of biological role, catalyzes the formation of a hydroxyacyl-CoA by addition of water on enoyl-CoA. Also exhibits 3-hydroxyacyl-CoA epimerase and 3-hydroxyacyl-CoA dehydrogenase activities. This chain is Fatty acid oxidation complex subunit alpha, found in Pectobacterium carotovorum subsp. carotovorum (strain PC1).